A 2385-amino-acid polypeptide reads, in one-letter code: Neuron navigator 3 (2385 aa).

Residues 17–38 (SKPVHTALPIPNLGTTGSQHCS) are disordered. The segment covering 29-38 (LGTTGSQHCS) has biased composition (polar residues). A Calponin-homology (CH) domain is found at 77-184 (KEDSKIYTDW…LFFSLSRYKQ (108 aa)). The interval 203 to 625 (VTHASPPSEA…LPQQQQHSHP (423 aa)) is disordered. Composition is skewed to polar residues over residues 210–243 (SEAS…TSQK), 258–279 (GSSS…FNSI), and 297–316 (KGPQ…STAG). The segment covering 318-329 (PPASAIPSPSAS) has biased composition (low complexity). Positions 335 to 352 (KSMNVKHSATSTMLTVKQ) are enriched in polar residues. Composition is skewed to low complexity over residues 353 to 363 (SSTATSPTPSS) and 427 to 439 (NSGL…TNSS). Positions 465–491 (PKEKEEKNRDKNKVCTEKPVKEEKDQV) are enriched in basic and acidic residues. Residues 521–535 (IPSSSGIPKPGSKVP) are compositionally biased toward low complexity. Polar residues-rich tracts occupy residues 537–548 (VKQTISPGSTAS), 557–567 (TKGSPSQSLSK), and 591–625 (ASPS…HSHP). A coiled-coil region spans residues 679–707 (ETRRMRTVKNIADLRQNLEETMSSLRGTQ). Disordered stretches follow at residues 877-1312 (ADSW…SPLF), 1351-1370 (SSSS…TSLH), 1410-1468 (LSES…SAMS), 1650-1778 (GALN…KRQN), 1850-1881 (DRLK…SRQS), and 2360-2385 (SSTQ…ESTL). Residues 882–895 (DSSSVSSGLSDTLD) show a composition bias toward low complexity. Over residues 896-925 (NISTDDLNTTSSVSSYSNITVPSRKNTQLR) the composition is skewed to polar residues. Residues 942–959 (EELKKPEEDFDSHGDAGG) are compositionally biased toward basic and acidic residues. Polar residues predominate over residues 979 to 988 (ASLSVSQTGS). Residues 1014–1026 (GKTDDAKASEKGK) are compositionally biased toward basic and acidic residues. 2 stretches are compositionally biased toward low complexity: residues 1074 to 1092 (GSSA…GSAT) and 1157 to 1170 (SSTS…SSKS). Positions 1187 to 1196 (GRSSPVTVNQ) are enriched in polar residues. 2 stretches are compositionally biased toward low complexity: residues 1206–1226 (VSDS…TSAS) and 1253–1263 (GAKAGGKSASA). The span at 1264–1289 (PNTEGVKSSSVMPSPSTTLARQGSLE) shows a compositional bias: polar residues. Residues 1296–1305 (GSMGSAGGLS) are compositionally biased toward gly residues. Residues 1436 to 1445 (NQEEGKEWLR) show a composition bias toward basic and acidic residues. The span at 1446-1462 (SHSTGGLQDTGNQSPLV) shows a compositional bias: polar residues. Serine 1459 and serine 1463 each carry phosphoserine. Residues 1562-1653 (AEEKAHSEQI…AQAAIQGALN (92 aa)) adopt a coiled-coil conformation. The segment covering 1672-1689 (SVSSINSATSHSSIGSGN) has biased composition (low complexity). Positions 1701–1714 (WVNSRGSELRSSFK) are enriched in polar residues. The stretch at 1794–1861 (EAEAEIILQL…LKAETGNTAK (68 aa)) forms a coiled coil. Over residues 1867 to 1881 (SESSSSTSSSSSRQS) the composition is skewed to low complexity.

The protein belongs to the Nav/unc-53 family. Highly expressed in brain. Expressed at low levels in heart and placenta. Present in activated T-cells but not in resting T-cells (at protein level). Down-regulated in primary neuroblastoma.

Its subcellular location is the nucleus outer membrane. Functionally, plays a role in cell migration. May be involved in neuron regeneration. May regulate IL2 production by T-cells. The polypeptide is Neuron navigator 3 (NAV3) (Homo sapiens (Human)).